Reading from the N-terminus, the 150-residue chain is Ribosome maturation factor RimP (150 aa).

The protein belongs to the RimP family.

The protein localises to the cytoplasm. In terms of biological role, required for maturation of 30S ribosomal subunits. This is Ribosome maturation factor RimP from Francisella tularensis subsp. holarctica (strain LVS).